The chain runs to 320 residues: MARNKIALIGSGMIGGTLAHLAGLKELGDVVLFDIAEGTPQGKGLDIAESSPVDGFDAKFTGANDYVAIEGADVVIVTAGVPRKPGMSRDDLLGINLKVMEQVGAGIKKYAPEAFVICITNPLDAMVWALQKFSGLPAHKVVGMAGVLDSARFRYFLSEEFNVSVEDVTAFVLGGHGDSMVPLARYSTVAGIPLPDLVKMGWTSQDKLDKIIQRTRDGGAEIVGLLKTGSAFYAPAASAIQVAESYLKDKKRVLPVAAQLSGQYGVKDMYVGVPTVIGANGVERIIEIDLDKDEKAQFDKSVASVAGLCEACIGIAPSLK.

NAD(+)-binding positions include 10–15 (GSGMIG) and D34. Substrate is bound by residues R83 and R89. Residues N96 and 119–121 (ITN) contribute to the NAD(+) site. Substrate is bound by residues N121 and R152. The Proton acceptor role is filled by H176.

Belongs to the LDH/MDH superfamily. MDH type 3 family.

It catalyses the reaction (S)-malate + NAD(+) = oxaloacetate + NADH + H(+). Its function is as follows. Catalyzes the reversible oxidation of malate to oxaloacetate. This chain is Malate dehydrogenase, found in Brucella suis (strain ATCC 23445 / NCTC 10510).